A 355-amino-acid polypeptide reads, in one-letter code: MFEKIEELEVRYHELESLLADPAVLGNQPEFRRLSREHNDLTPLIESYRTYKKVLEEMEGNRELLADPEMKEMAQAELEELEQRQEELEGEIKLLLLPRDPNDDRNVILEIRAGTGGDESALFAGDLFRMYSRFAERNRWKVEVMSASESERGGFKEIVALIEGQGVFAKLKYESGTHRVQRVPETEAQGRIHTSACTVAVLPEAEDIEVDINPADLKIDVYRASGAGGQHVNKTESAVRITHIPTGIVVECQDERSQIKNRAKAMKVLKTKILDGLHQEQNARIAADRKQQVGSGDRSERIRTYNFPQGRMTDHRIGLTLYRLDSLMEGDIAEVVDALRTHYQMEALKAQAEAA.

Residue Gln-230 is modified to N5-methylglutamine.

It belongs to the prokaryotic/mitochondrial release factor family. Methylated by PrmC. Methylation increases the termination efficiency of RF1.

It localises to the cytoplasm. Its function is as follows. Peptide chain release factor 1 directs the termination of translation in response to the peptide chain termination codons UAG and UAA. This chain is Peptide chain release factor 1, found in Geobacter sulfurreducens (strain ATCC 51573 / DSM 12127 / PCA).